The following is a 315-amino-acid chain: Ester hydrolase C11orf54 homolog (315 aa).

Residues H266, H268, and H278 each contribute to the Zn(2+) site.

In terms of assembly, monomer. It depends on Zn(2+) as a cofactor.

The protein localises to the nucleus. The protein resides in the cytoplasm. In terms of biological role, exhibits ester hydrolase activity on the substrate p-nitrophenyl acetate, in vitro. Regulates DNA damage and repair by regulating HIF1A degradation via chaperone-mediated autophagy (CMA). The chain is Ester hydrolase C11orf54 homolog from Rattus norvegicus (Rat).